The following is a 161-amino-acid chain: uncharacterized protein (161 aa).

The first 35 residues, 1-35 (MVMAMGFDTVVAAIMATAIIVAVAYTFLAGSTSIA), serve as a signal peptide directing secretion.

This is an uncharacterized protein from Archaeoglobus fulgidus (strain ATCC 49558 / DSM 4304 / JCM 9628 / NBRC 100126 / VC-16).